The following is a 125-amino-acid chain: Large ribosomal subunit protein bL12 (125 aa).

Belongs to the bacterial ribosomal protein bL12 family. As to quaternary structure, homodimer. Part of the ribosomal stalk of the 50S ribosomal subunit. Forms a multimeric L10(L12)X complex, where L10 forms an elongated spine to which 2 to 4 L12 dimers bind in a sequential fashion. Binds GTP-bound translation factors.

In terms of biological role, forms part of the ribosomal stalk which helps the ribosome interact with GTP-bound translation factors. Is thus essential for accurate translation. In Helicobacter acinonychis (strain Sheeba), this protein is Large ribosomal subunit protein bL12.